Reading from the N-terminus, the 412-residue chain is Intraflagellar transport protein che-13 (412 aa).

2 disordered regions span residues M1 to I21 and P162 to D193. Residues E165–D193 show a composition bias toward acidic residues. A coiled-coil region spans residues Q302–I393.

This sequence belongs to the IFT57 family. In terms of assembly, component of the IFT complex B composed of at least che-2, che-13, dyf-1, dyf-3, dyf-6, dyf-11, dyf-13, ift-20, ift-74, ift-81, ifta-2, osm-1, osm-5 and osm-6.

Its subcellular location is the cytoplasm. The protein localises to the cytoskeleton. It is found in the cilium axoneme. Component of the intraflagellar transport (IFT) complex B required for transport of proteins in the motile cilium. May be required for ciliary entrance and transport of specific ciliary cargo proteins such as che-3 which are related to motility. Required for the formation of chemosensory cilia that detect chemosensory cues. The polypeptide is Intraflagellar transport protein che-13 (Caenorhabditis elegans).